The sequence spans 251 residues: uncharacterized protein (251 aa).

The next 4 helical transmembrane spans lie at 56-76 (LAVV…TLVA), 104-124 (IITV…FLLT), 184-204 (HGFV…LIIV), and 208-228 (YLIA…ANIS).

It localises to the membrane. This is an uncharacterized protein from Caenorhabditis elegans.